Consider the following 448-residue polypeptide: Chromosomal replication initiator protein DnaA (448 aa).

Positions Met-1–Lys-73 are domain I, interacts with DnaA modulators. Residues Lys-73–Ser-109 are domain II. The domain III, AAA+ region stretch occupies residues Ile-110–Ser-326. The ATP site is built by Gly-154, Gly-156, Lys-157, and Thr-158. The domain IV, binds dsDNA stretch occupies residues Ser-327–Asn-448.

It belongs to the DnaA family. In terms of assembly, oligomerizes as a right-handed, spiral filament on DNA at oriC.

It is found in the cytoplasm. Functionally, plays an essential role in the initiation and regulation of chromosomal replication. ATP-DnaA binds to the origin of replication (oriC) to initiate formation of the DNA replication initiation complex once per cell cycle. Binds the DnaA box (a 9 base pair repeat at the origin) and separates the double-stranded (ds)DNA. Forms a right-handed helical filament on oriC DNA; dsDNA binds to the exterior of the filament while single-stranded (ss)DNA is stabiized in the filament's interior. The ATP-DnaA-oriC complex binds and stabilizes one strand of the AT-rich DNA unwinding element (DUE), permitting loading of DNA polymerase. After initiation quickly degrades to an ADP-DnaA complex that is not apt for DNA replication. Binds acidic phospholipids. The chain is Chromosomal replication initiator protein DnaA from Clostridium novyi (strain NT).